A 294-amino-acid polypeptide reads, in one-letter code: Nucleotide-binding protein Smlt1108 (294 aa).

G16–S23 is an ATP binding site. D69–G72 lines the GTP pocket.

Belongs to the RapZ-like family.

Its function is as follows. Displays ATPase and GTPase activities. The sequence is that of Nucleotide-binding protein Smlt1108 from Stenotrophomonas maltophilia (strain K279a).